Here is a 165-residue protein sequence, read N- to C-terminus: Nucleotide-binding protein P9211_04811 (165 aa).

It belongs to the YajQ family.

Its function is as follows. Nucleotide-binding protein. The protein is Nucleotide-binding protein P9211_04811 of Prochlorococcus marinus (strain MIT 9211).